A 472-amino-acid chain; its full sequence is MTSDFKVIIVGGSVAGLSLAHCLEKIGVSFMVLEKGNQIAPQLGASIGILPNGGRILDQLGIFHSIEDEIEPLESAMMRYPDGFSFKSQYPQALHTSFGYPVAFLERQRFLQILYDKLKSKDCVFTNKRVVSIASGQDKVTAKTSDGAKYLADIVIGADGVHSIVRSEIWRHLKENSQISVLEAPNASIKHDYSCIYGISLNVPQIILGIQLNCLDDGVSIHLFTGKQSKLFWFVIIKTPQASFAKVEIDNTHTARCICEGLRTKKVSDTLCFEDVWSRCTIFKMTPLEEGVFKHWNYGRLACIGDAIRKMAPNNGQGANMAIEDACSLANILQKKISHGSIRDQDINSMFQEFSMAQRARTESVCAQSEFLVRMHANQGIGRRLLGRYLIPFLYDAPAGLSGFSISGATRIEFIDLPTRSLRGAWGKSWRGSWEFILQSLVYLRPKFRIVYALYLVAAAAFILYCLSSLFP.

Residues 7–27 (VIIVGGSVAGLSLAHCLEKIG) form a helical membrane-spanning segment. Residues Glu34, Gly48, and Arg107 each coordinate FAD. N-linked (GlcNAc...) asparagine glycosylation occurs at Asn186. Residues Asp306 and Ala319 each coordinate FAD. Residues 450–470 (IVYALYLVAAAAFILYCLSSL) form a helical membrane-spanning segment.

This sequence belongs to the paxM FAD-dependent monooxygenase family. It depends on FAD as a cofactor.

The protein localises to the membrane. It functions in the pathway secondary metabolite biosynthesis. Its function is as follows. FAD-dependent monooxygenase; part of the gene cluster that mediates the biosynthesis of lolitrems, indole-diterpene mycotoxins that are potent tremorgens in mammals, and are synthesized by clavicipitaceous fungal endophytes in association with their grass hosts. The geranylgeranyl diphosphate (GGPP) synthase ltmG is proposed to catalyze the first step in lolitremB biosynthesis. LtmG catalyzes a series of iterative condensations of isopentenyl diphosphate (IPP) with dimethylallyl diphosphate (DMAPP), geranyl diphosphate (GPP), and farnesyl diphosphate (FPP), to form GGPP. GGPP then condenses with indole-3-glycerol phosphate to form 3-geranylgeranylindole, an acyclic intermediate, to be incorporated into paxilline. Either ltmG or ltmC could be responsible for this step, as both are putative prenyl transferases. The FAD-dependent monooxygenase ltmM then catalyzes the epoxidation of the two terminal alkenes of the geranylgeranyl moiety, which is subsequently cyclized by ltmB, to paspaline. The cytochrome P450 monooxygenases ltmQ and ltmP can sequentially oxidize paspaline to terpendole E and terpendole F. Alternatively, ltmP converts paspaline to an intermediate which is oxidized by ltmQ to terpendole F. LtmF, ltmK, ltmE and ltmJ appear to be unique to the epichloe endophytes. The prenyltransferase ltmF is involved in the 27-hydroxyl-O-prenylation. The cytochrome P450 monooxygenase ltmK is required for the oxidative acetal ring formation. The multi-functional prenyltransferase ltmE is required for C20- and C21-prenylations of the indole ring of paspalanes and acts together with the cytochrome P450 monooxygenase ltmJ to yield lolitremanes by multiple oxidations and ring closures. The stereoisomer pairs of lolitriol and lolitrem N or lolitrem B and lolitrem F may be attributed to variations in the way in which ring closure can occur under the action of ltmJ. While the major product of this pathway is lolitrem B, the prenyl transferases and cytochrome P450 monooxygenases identified in this pathway have a remarkable versatility in their regio- and stereo-specificities to generate a diverse range of metabolites that are products of a metabolic grid rather than a linear pathway. The sequence is that of FAD-dependent monooxygenase ltmM (ltmM) from Epichloe festucae var. lolii (Neotyphodium lolii).